A 571-amino-acid chain; its full sequence is Cytochrome P450 monooxygenase g430 (571 aa).

The helical transmembrane segment at 8-28 threads the bilayer; that stretch reads GALIWVVTSYILYAIISNFII. Residue Cys-471 participates in heme binding. The segment at 552-571 is disordered; that stretch reads CPLPAEAKLPKSRKPIGTAS.

Belongs to the cytochrome P450 family. Heme is required as a cofactor.

The protein resides in the membrane. The protein operates within mycotoxin biosynthesis. In terms of biological role, cytochrome P450 monooxygenase; part of the gene cluster that mediates the biosynthesis of 1233A, a natural compound known as an inhibitor of HMG-CoA synthase in the mevalonate pathway and with antibacterial and antifungal activities. The highly reducing polyketide synthase g433 is responsible for the 1233A backbone biosynthesis and the cytochrome P450 monooxygenase g430 catalyzes oxidation of the backbone. This is Cytochrome P450 monooxygenase g430 from Fusarium sp.